The following is a 125-amino-acid chain: Large ribosomal subunit protein bL19 (125 aa).

It belongs to the bacterial ribosomal protein bL19 family.

Functionally, this protein is located at the 30S-50S ribosomal subunit interface and may play a role in the structure and function of the aminoacyl-tRNA binding site. In Ehrlichia ruminantium (strain Gardel), this protein is Large ribosomal subunit protein bL19.